A 465-amino-acid polypeptide reads, in one-letter code: 23S rRNA (uracil(1939)-C(5))-methyltransferase RlmD (465 aa).

The disordered stretch occupies residues 1–20; that stretch reads MSEAVPLSTPGASHAGAATD. One can recognise a TRAM domain in the interval 12–80; it reads ASHAGAATDR…PTYEQAQVVD (69 aa). The [4Fe-4S] cluster site is built by Cys93, Cys99, Cys102, and Cys181. S-adenosyl-L-methionine contacts are provided by Gln289, Phe318, Asn323, Glu339, Asn367, and Asp388. Cys421 (nucleophile) is an active-site residue.

The protein belongs to the class I-like SAM-binding methyltransferase superfamily. RNA M5U methyltransferase family. RlmD subfamily.

It catalyses the reaction uridine(1939) in 23S rRNA + S-adenosyl-L-methionine = 5-methyluridine(1939) in 23S rRNA + S-adenosyl-L-homocysteine + H(+). Functionally, catalyzes the formation of 5-methyl-uridine at position 1939 (m5U1939) in 23S rRNA. This Burkholderia thailandensis (strain ATCC 700388 / DSM 13276 / CCUG 48851 / CIP 106301 / E264) protein is 23S rRNA (uracil(1939)-C(5))-methyltransferase RlmD.